Consider the following 858-residue polypeptide: Leucine--tRNA ligase (858 aa).

The 'HIGH' region motif lies at 42–52; sequence PYPSGRLHMGH. The 'KMSKS' region signature appears at 618-622; sequence KMSKS. Residue Lys621 participates in ATP binding.

Belongs to the class-I aminoacyl-tRNA synthetase family.

It is found in the cytoplasm. The enzyme catalyses tRNA(Leu) + L-leucine + ATP = L-leucyl-tRNA(Leu) + AMP + diphosphate. The sequence is that of Leucine--tRNA ligase from Aliivibrio fischeri (strain MJ11) (Vibrio fischeri).